A 71-amino-acid chain; its full sequence is MKLTCVVIVAVLLLTACQLITADDSRGTQRHRALRSDTKLSMSTRCKGKGASCSRTMYNCCSGSCNRGKCG.

Intrachain disulfides connect cysteine 46/cysteine 61, cysteine 53/cysteine 65, and cysteine 60/cysteine 70. At cysteine 70 the chain carries Cysteine amide; in CnVIID.

Belongs to the conotoxin M superfamily. As to expression, expressed by the venom duct.

It is found in the secreted. Functionally, omega-conotoxins act at presynaptic membranes, they bind and block voltage-gated calcium channels (Cav). The polypeptide is Omega-conotoxin-like CnVIIF (Conus consors (Singed cone)).